The primary structure comprises 393 residues: Phosphatidate cytidylyltransferase (393 aa).

The next 8 membrane-spanning stretches (helical) occupy residues 49-69 (NFFR…WISV), 73-93 (IYSF…IIGI), 108-128 (IILG…IMMM), 141-161 (LSFV…ASLR), 171-191 (LFAL…CAIF), 198-218 (FWFV…YVVG), 237-257 (GFIG…HLHV), and 290-310 (IHII…GFLA).

The protein belongs to the CDS family.

The protein resides in the membrane. It catalyses the reaction a 1,2-diacyl-sn-glycero-3-phosphate + CTP + H(+) = a CDP-1,2-diacyl-sn-glycerol + diphosphate. It participates in phospholipid metabolism; CDP-diacylglycerol biosynthesis; CDP-diacylglycerol from sn-glycerol 3-phosphate: step 3/3. In Encephalitozoon cuniculi (strain GB-M1) (Microsporidian parasite), this protein is Phosphatidate cytidylyltransferase (CDS1).